Reading from the N-terminus, the 349-residue chain is Putative transport protein jhp_0514 (349 aa).

Helical transmembrane passes span 6 to 26, 27 to 47, 56 to 76, 143 to 163, 195 to 215, 224 to 244, 258 to 278, and 300 to 320; these read FFWI…QDFL, MDAL…VFLN, SFLC…FIVY, LKLV…FYYG, VLLT…TMII, LGIL…LIWI, EAIF…DSVI, and ILIF…GIIV.

The protein belongs to the autoinducer-2 exporter (AI-2E) (TC 2.A.86) family.

It is found in the cell membrane. The protein is Putative transport protein jhp_0514 of Helicobacter pylori (strain J99 / ATCC 700824) (Campylobacter pylori J99).